The chain runs to 256 residues: uncharacterized protein (256 aa).

Transmembrane regions (helical) follow at residues 42–62 (LIAL…IWFF), 73–93 (FFTL…LIFL), and 108–128 (WLFL…WLIV).

The protein resides in the cell membrane. This is an uncharacterized protein from Mycoplasma genitalium (strain ATCC 33530 / DSM 19775 / NCTC 10195 / G37) (Mycoplasmoides genitalium).